The chain runs to 899 residues: Core protein VP3 (899 aa).

A disordered region spans residues 1–22 (MAEPPDAATPKTSPYLKGDELS).

This sequence belongs to the orbivirus VP3 family.

It localises to the virion. Functionally, the VP3 protein is one of the five proteins (with VP1, VP4, VP6 and VP7) which form the inner capsid of the virus. This Antilocapra americana (Pronghorn) protein is Core protein VP3 (Segment-3).